Consider the following 187-residue polypeptide: UPF0301 protein GOX1459 (187 aa).

This sequence belongs to the UPF0301 (AlgH) family.

This is UPF0301 protein GOX1459 from Gluconobacter oxydans (strain 621H) (Gluconobacter suboxydans).